We begin with the raw amino-acid sequence, 536 residues long: Caspase recruitment domain-containing protein 9 (536 aa).

Ser-2 is modified (phosphoserine). Residues Asp-3, Cys-10, and His-73 each coordinate Zn(2+). The 93-residue stretch at 6 to 98 (NDDECWSTLE…QLYRKVTGKE (93 aa)) folds into the CARD domain. A linker region spans residues 99 to 116 (PARVFSMIIDASGESGLT). Positions 117-272 (QLLMTEVMKL…ELQVSVQEGK (156 aa)) form a coiled coil. A Glycyl lysine isopeptide (Lys-Gly) (interchain with G-Cter in ubiquitin) cross-link involves residue Lys-125. Thr-231 carries the post-translational modification Phosphothreonine; by PKC/PRKCD. Phosphoserine is present on Ser-277. The stretch at 303–415 (SLRKDLRQAE…LLAAEGRLKQ (113 aa)) forms a coiled coil. Residues Ser-424, Ser-425, Ser-431, Ser-451, Ser-461, Ser-483, and Ser-498 each carry the phosphoserine modification. A disordered region spans residues 425–451 (SDLEDSSPRNSQELSLPQDLEEDAQLS). Residues 476–536 (LTHGMGPSSS…GSDNTDTEGS (61 aa)) form a disordered region. A compositionally biased stretch (basic and acidic residues) spans 487 to 502 (PPEKERRRLKESFENY). Residues Thr-531 and Thr-533 each carry the phosphothreonine; by CK2 modification.

In terms of assembly, monomer. Homodimer; homodimerization is mediated by the CARD domain which forms an extensive interaction with the adjacent linker and coiled-coil regions; leads to an autoinhibited state. Homomultimer; polymerizes following activation, forming a nucleating helical template that seeds BCL10-filament formation via a CARD-CARD interaction. Interacts (via CARD domain) with BCL10 (via CARD domain); interaction takes place following CARD9 activation and polymerization, leading to the formation of a filamentous CBM complex assembly. Component of a CBM complex (CARD9-BCL10, MALT1), composed of CARD9, BCL10 and MALT1. Interacts with RASGRF1. Interacts with NOD2 (via NACHT domain); interaction is direct. Interacts with RIPK2. Interacts with VHL; without leading to protein degradation. Phosphorylated at Thr-231 by PRKCD downstream of C-type lectin receptors activation: phosphorylation promotes interaction with BCL10, followed by activation of NF-kappa-B and MAP kinase p38 pathways. Phosphorylated at Thr-531 and Thr-531 by CK2 following interaction with VHL, leading to inhibit the ability to activate NF-kappa-B. In terms of processing, ubiquitinated at Lys-125 via 'Lys-27'-linked ubiquitin by TRIM62 downstream of C-type lectin receptors activation; leading to CARD9 activation, followed by activation of NF-kappa-B and MAP kinase p38 pathways. Deubiquitinated at Lys-125 by USP15, inhibiting CARD9. Specifically expressed in myeloid cells. Not expressed in non-lymphoid organs.

Its subcellular location is the cytoplasm. Maintained in an autoinhibited state via homodimerization in which the CARD domain forms an extensive interaction with the adjacent linker and coiled-coil regions. Activation downstream of C-type lectin receptors, by phosphorylation by PRKCD and/or ubiquitination by TRIM62, triggers disruption of the CARD domain-coiled coil interface, CARD9 homooligomerization and BCL10 recruitment, followed by activation of NF-kappa-B and MAP kinase p38 pathways. Zinc-binding inhibits activation by stabilizing the CARD ground-state conformation and restricting its capacity to form BCL10-nucleating filaments. Adapter protein that plays a key role in innate immune response against fungi by forming signaling complexes downstream of C-type lectin receptors. CARD9-mediated signals are essential for antifungal immunity against a subset of fungi from the phylum Ascomycota. Transduces signals in myeloid cells downstream of C-type lectin receptors CLEC7A (dectin-1), CLEC6A (dectin-2) and CLEC4E (Mincle), which detect pathogen-associated molecular pattern metabolites (PAMPs), such as fungal carbohydrates, and trigger CARD9 activation. Upon activation, CARD9 homooligomerizes to form a nucleating helical template that recruits BCL10 via CARD-CARD interaction, thereby promoting polymerization of BCL10 and subsequent recruitment of MALT1: this leads to activation of NF-kappa-B and MAP kinase p38 (MAPK11, MAPK12, MAPK13 and/or MAPK14) pathways which stimulate expression of genes encoding pro-inflammatory cytokines and chemokines. CARD9 signaling in antigen-presenting cells links innate sensing of fungi to the activation of adaptive immunity and provides a cytokine milieu that induces the development and subsequent of interleukin 17-producing T helper (Th17) cells. Also involved in activation of myeloid cells via classical ITAM-associated receptors and TLR: required for TLR-mediated activation of MAPK, while it is not required for TLR-induced activation of NF-kappa-B. CARD9 can also be engaged independently of BCL10: forms a complex with RASGRF1 downstream of C-type lectin receptors, which recruits and activates HRAS, leading to ERK activation and the production of cytokines. Acts as an important regulator of the intestinal commensal fungi (mycobiota) component of the gut microbiota. Plays an essential role in antifungal immunity against dissemination of gut fungi: acts by promoting induction of antifungal IgG antibodies response in CX3CR1(+) macrophages to confer protection against disseminated C.albicans or C.auris infection. Also mediates immunity against other pathogens, such as certain bacteria, viruses and parasites; CARD9 signaling is however redundant with other innate immune responses. In response to L.monocytogenes infection, required for the production of inflammatory cytokines activated by intracellular peptidoglycan: acts by connecting NOD2 recognition of peptidoglycan to downstream activation of MAP kinases (MAPK) without activating NF-kappa-B. The chain is Caspase recruitment domain-containing protein 9 from Mus musculus (Mouse).